The chain runs to 242 residues: uncharacterized protein (242 aa).

This is an uncharacterized protein from Agrobacterium vitis (Rhizobium vitis).